The chain runs to 274 residues: Protein FAM210A (274 aa).

The segment covering 51–66 (KWLHSQPKQQDSSTKT) has biased composition (polar residues). A disordered region spans residues 51–91 (KWLHSQPKQQDSSTKTPVHDLPSGSQHQSEESSPSAKSSIS). A compositionally biased stretch (low complexity) spans 81–91 (ESSPSAKSSIS). A DUF1279 domain is found at 105–217 (DQSIGLLKRF…GYLSTPPLVK (113 aa)). The helical transmembrane segment at 124–144 (VLIPVHLVTSSFWFGSFYYAA) threads the bilayer. Residues 221 to 274 (QDRMEETKELFTEKMEETRDIISGKMEETKDRISEKLQETKDRVAFRKKKNEEM) adopt a coiled-coil conformation.

Belongs to the FAM210 family.

Its subcellular location is the membrane. The protein localises to the mitochondrion. The protein resides in the cytoplasm. Functionally, may play a role in the structure and strength of both muscle and bone. The chain is Protein FAM210A (fam210a) from Xenopus tropicalis (Western clawed frog).